The primary structure comprises 94 residues: Integration host factor subunit beta (94 aa).

It belongs to the bacterial histone-like protein family. As to quaternary structure, heterodimer of an alpha and a beta chain.

Functionally, this protein is one of the two subunits of integration host factor, a specific DNA-binding protein that functions in genetic recombination as well as in transcriptional and translational control. The protein is Integration host factor subunit beta of Brucella abortus (strain S19).